The following is a 247-amino-acid chain: DNA polymerase sliding clamp (247 aa).

This sequence belongs to the PCNA family. As to quaternary structure, homotrimer. The subunits circularize to form a toroid; DNA passes through its center. Replication factor C (RFC) is required to load the toroid on the DNA.

Sliding clamp subunit that acts as a moving platform for DNA processing. Responsible for tethering the catalytic subunit of DNA polymerase and other proteins to DNA during high-speed replication. The polypeptide is DNA polymerase sliding clamp (Haloarcula marismortui (strain ATCC 43049 / DSM 3752 / JCM 8966 / VKM B-1809) (Halobacterium marismortui)).